Here is a 164-residue protein sequence, read N- to C-terminus: UPF0114 protein YqhA (164 aa).

The next 3 membrane-spanning stretches (helical) occupy residues 10–32 (YASRWLLAPVYFGLSLALIALAL), 53–75 (LILVLLSLVDMTLVGGLLVMVMF), and 136–155 (LMWYVIIHLTFVLSAFVMGY).

It belongs to the UPF0114 family.

It is found in the cell membrane. This Salmonella typhi protein is UPF0114 protein YqhA.